The primary structure comprises 1483 residues: Neuropathy target esterase sws (1483 aa).

Over 1-34 the chain is Lumenal; it reads MDVLELLRASANGCYNTLFSDAWFQYVSKQIATT. A helical membrane pass occupies residues 35–55; the sequence is MYWYGALLVIGVLFIAWFLYF. Residues 56–1483 lie on the Cytoplasmic side of the membrane; it reads KRLARLRLRD…ENLTKTDTKN (1428 aa). Residue 174–301 coordinates a nucleoside 3',5'-cyclic phosphate; that stretch reads IFGHFEKPIF…IRVIQVIMIR (128 aa). Disordered regions lie at residues 348-380 and 404-440; these read ASRP…PNAN and SSAV…GTSI. Positions 413-440 are enriched in polar residues; it reads GTRRSSTTYGPSGESPNGNANTAPGTSI. Ser-418 and Ser-424 each carry phosphoserine. Residues 456–585 and 574–701 contribute to the a nucleoside 3',5'-cyclic phosphate site; these read ELGL…VVRR and IVLD…LSHR. The region spanning 927–1093 is the PNPLA domain; the sequence is LVLGGGGARG…VNNLPGHLWR (167 aa). Residues 931–936 carry the GXGXXG motif; the sequence is GGGARG. A GXSXG motif is present at residues 958–962; that stretch reads GVSIG. The active-site Nucleophile is the Ser-960. Asp-1080 acts as the Proton acceptor in catalysis. A DGA/G motif is present at residues 1080–1082; that stretch reads DGG. Residue Ser-1174 is modified to Phosphoserine. Residues 1349–1483 form a disordered region; sequence DKATQSTPPT…ENLTKTDTKN (135 aa). The segment covering 1351–1373 has biased composition (polar residues); the sequence is ATQSTPPTPNKQHALSPTSSQTN. The span at 1382-1396 shows a compositional bias: basic and acidic residues; sequence KPKEKQPSYDKLDRE. Residues 1410–1419 are compositionally biased toward low complexity; the sequence is ERSSMQQRDS. Over residues 1445 to 1458 the composition is skewed to basic and acidic residues; it reads LNKPEQQPEQKPVP. Positions 1465–1474 are enriched in low complexity; that stretch reads QKQQDQQQQE.

This sequence belongs to the NTE family. In terms of assembly, interacts with Pka-C3; interaction inhibits the catalytic function of Pka-C3 and the esterase activity of sws.

It localises to the endoplasmic reticulum membrane. The enzyme catalyses a 1-acyl-sn-glycero-3-phosphocholine + H2O = sn-glycerol 3-phosphocholine + a fatty acid + H(+). Functionally, phospholipase B that deacylates intracellular phosphatidylcholine (PtdCho), generating glycerophosphocholine (GroPtdCho). This deacylation occurs at both sn-2 and sn-1 positions of PtdCho. Its specific chemical modification by certain organophosphorus (OP) compounds leads to distal axonopathy. Plays a role in the signaling mechanism between neurons and glia that regulates glia wrapping during development of the adult brain. Essential for membrane lipid homeostasis and cell survival in both neurons and glia of the adult brain. The polypeptide is Neuropathy target esterase sws (Drosophila virilis (Fruit fly)).